The chain runs to 1207 residues: Putative coatomer subunit alpha (1207 aa).

WD repeat units lie at residues S9–D50, G51–S90, G93–T134, G135–A174, G210–V249, G254–T293, R296–N336, and S370–P411. 2 positions are modified to phosphoserine: S409 and S942.

Oligomeric complex that consists of at least the alpha, beta, beta', gamma, delta, epsilon and zeta subunits.

Its subcellular location is the cytoplasm. It is found in the golgi apparatus membrane. The coatomer is a cytosolic protein complex that binds to dilysine motifs and reversibly associates with Golgi non-clathrin-coated vesicles, which further mediate biosynthetic protein transport from the ER, via the Golgi up to the trans Golgi network. Coatomer complex is required for budding from Golgi membranes, and is essential for the retrograde Golgi-to-ER transport of dilysine-tagged proteins. The polypeptide is Putative coatomer subunit alpha (Schizosaccharomyces pombe (strain 972 / ATCC 24843) (Fission yeast)).